Consider the following 192-residue polypeptide: Phosphoheptose isomerase (192 aa).

Positions 37–192 constitute an SIS domain; it reads IAASLRDGGK…IMLIEKELAV (156 aa). 52-54 provides a ligand contact to substrate; sequence NGG. The Zn(2+) site is built by His61 and Glu65. Substrate-binding positions include Glu65, 93 to 94, 119 to 121, Ser124, and Gln172; these read ND and STS. Zn(2+) contacts are provided by Gln172 and His180.

Belongs to the SIS family. GmhA subfamily. As to quaternary structure, homotetramer. It depends on Zn(2+) as a cofactor.

The protein resides in the cytoplasm. The catalysed reaction is 2 D-sedoheptulose 7-phosphate = D-glycero-alpha-D-manno-heptose 7-phosphate + D-glycero-beta-D-manno-heptose 7-phosphate. The protein operates within carbohydrate biosynthesis; D-glycero-D-manno-heptose 7-phosphate biosynthesis; D-glycero-alpha-D-manno-heptose 7-phosphate and D-glycero-beta-D-manno-heptose 7-phosphate from sedoheptulose 7-phosphate: step 1/1. In terms of biological role, catalyzes the isomerization of sedoheptulose 7-phosphate in D-glycero-D-manno-heptose 7-phosphate. The polypeptide is Phosphoheptose isomerase (Tolumonas auensis (strain DSM 9187 / NBRC 110442 / TA 4)).